Consider the following 257-residue polypeptide: 14-3-3-like protein A (257 aa).

The protein belongs to the 14-3-3 family.

This is 14-3-3-like protein A (GF14A) from Glycine max (Soybean).